The chain runs to 82 residues: Putative membrane protein insertion efficiency factor (82 aa).

This sequence belongs to the UPF0161 family.

Its subcellular location is the cell inner membrane. Could be involved in insertion of integral membrane proteins into the membrane. The sequence is that of Putative membrane protein insertion efficiency factor from Rickettsia rickettsii (strain Iowa).